The following is a 316-amino-acid chain: Neutrophil-stimulating factor 1 (316 aa).

The first 21 residues, 1–21 (METSLPITVVFLIVLITGAQT), serve as a signal peptide directing secretion. The interval 126–316 (HGEMLERMTA…WFAVSWNDRG (191 aa)) is involved in interaction with human CD47. An N-linked (GlcNAc...) asparagine glycan is attached at N169.

Interacts with human CD4. Interacts with human CD47; the interaction results in inhibition of phagocytosis activity of host macrophages. As to expression, female salivary gland (at protein level). Saliva (at protein level). Some expression in ovary and midgut (at protein level).

The protein localises to the secreted. In terms of biological role, activates host neutrophils; induces expression of IL1B and CXCL2 at the bite site. Promotes activation of human CD4(+) T-cells. Inhibits phagocytosis activity of host macrophages via the interaction with CD47 receptor on their surface. Suppresses expression of pro-inflammatory cytokines, such as IFN-gamma/IFNG, IL2, TNF-alpha/TNF, IL12B, IL8/CXCL8, IL6, in host white blood cells. Reduces host polymorphonuclear neutrophil chemotaxis induced by N-formylmethionine-leucylphenylalanine (fMLF). Reduces CD11b/ITGAM expression in fMLF-induced host polymorphonuclear neutrophils. Its function is as follows. (Microbial infection) Enhances early replication of Zika virus in the host. In Aedes aegypti (Yellowfever mosquito), this protein is Neutrophil-stimulating factor 1.